Consider the following 1827-residue polypeptide: Chromodomain-helicase-DNA-binding protein 2 (1827 aa).

Residues 1 to 14 (MMRNKDKSQEEDSS) are compositionally biased toward basic and acidic residues. The segment at 1–264 (MMRNKDKSQE…EQQDNSETIE (264 aa)) is disordered. Residues 15–75 (LHSNASSRSA…SESESAGSKS (61 aa)) are compositionally biased toward low complexity. Basic and acidic residues-rich tracts occupy residues 81–101 (EAKEKPASKKERIADVKKMWE), 115–128 (SRQEPSRFNVKEEA), and 146–155 (KKQEKWKQDP). Residues 175–204 (GKARRPVPRRTVPKPQVKKQPKIQRGKRKK) are compositionally biased toward basic residues. Phosphoserine occurs at positions 207 and 208. Residues 234 to 258 (EDDDFETDSDDLIEMTGEGGDEQQD) show a composition bias toward acidic residues. Position 240 is a phosphothreonine (Thr-240). Ser-242 carries the post-translational modification Phosphoserine. 2 consecutive Chromo domains span residues 261 to 353 (ETIE…QWLG) and 378 to 456 (QIVE…IPTR). The 171-residue stretch at 496-666 (AHSWCKSNSV…WSLLHFIMPE (171 aa)) folds into the Helicase ATP-binding domain. 509-516 (DEMGLGKT) contacts ATP. The short motif at 617–620 (DEAH) is the DEAH box element. The 152-residue stretch at 795-946 (LLDKLLTRLR…HLVIQRMDTT (152 aa)) folds into the Helicase C-terminal domain. Disordered stretches follow at residues 1030 to 1124 (EDEE…RSVR), 1329 to 1465 (GTVA…DDLD), 1556 to 1638 (HKKR…ADRG), and 1679 to 1827 (HMDA…VRKT). Residues 1037–1065 (ERPHKDWDEIIPEEQRKKVEEEERQKELE) are compositionally biased toward basic and acidic residues. 4 positions are modified to phosphoserine: Ser-1085, Ser-1087, Ser-1365, and Ser-1386. The segment covering 1347 to 1371 (KKENKAPRLKDEHGLEPASPRHSDN) has biased composition (basic and acidic residues). Composition is skewed to basic and acidic residues over residues 1396 to 1431 (ENKENKEKPVSSRKDREGDKERKKSKDKKEKVKGGD) and 1565 to 1574 (EQKKKDDSLG). A CHD1 helical C-terminal domain (CHCT) region spans residues 1464–1566 (LDQETFSICK…KKRSQEEEEQ (103 aa)). Positions 1584–1601 (SGSSRDSLISQSHTSHNL) are enriched in polar residues. Basic and acidic residues-rich tracts occupy residues 1697 to 1719 (RPYEQYNSDRDHRGHRDYYDRHH), 1738 to 1748 (QDFRRMSDHRP), 1759 to 1771 (DHYRSFHTDKLGE), and 1794 to 1813 (SPHDSKSPLDHRSPLERSLE). Ser-1806 bears the Phosphoserine mark.

Interacts with MYOD1. Interacts with histone H3.3. As to expression, widely expressed.

It localises to the nucleus. The enzyme catalyses ATP + H2O = ADP + phosphate + H(+). Its function is as follows. ATP-dependent chromatin-remodeling factor that specifically binds to the promoter of target genes, leading to chromatin remodeling, possibly by promoting deposition of histone H3.3. Involved in myogenesis via interaction with MYOD1: binds to myogenic gene regulatory sequences and mediates incorporation of histone H3.3 prior to the onset of myogenic gene expression, promoting their expression. This chain is Chromodomain-helicase-DNA-binding protein 2 (Chd2), found in Mus musculus (Mouse).